The following is a 123-amino-acid chain: Cliotide T12 (123 aa).

Positions 1–28 (MASLRIAPLALFFFLAASVMFTVEKTEA) are cleaved as a signal peptide. The segment at residues 29 to 58 (GIPCGESCVFIPCITGAIGCSCKSKVCYRD) is a cross-link (cyclopeptide (Gly-Asp)). Cystine bridges form between cysteine 32–cysteine 48, cysteine 36–cysteine 50, and cysteine 41–cysteine 55. A propeptide spans 59 to 123 (HVIAAEAKTM…KDHLKMSVPN (65 aa)) (removed in mature form).

Post-translationally, contains 3 disulfide bonds. This is a cyclic peptide.

Functionally, probably participates in a plant defense mechanism. This is Cliotide T12 from Clitoria ternatea (Butterfly pea).